The sequence spans 930 residues: Isoleucine--tRNA ligase (930 aa).

The tract at residues 1–21 is disordered; sequence MRVKDTLNLGKTKFPMRGRLP. A 'HIGH' region motif is present at residues 57 to 67; sequence PYANGPIHIGH. Glu555 serves as a coordination point for L-isoleucyl-5'-AMP. A 'KMSKS' region motif is present at residues 596–600; the sequence is KMSKS. Lys599 lines the ATP pocket. Residues Cys889, Cys892, Cys909, and Cys912 each contribute to the Zn(2+) site.

The protein belongs to the class-I aminoacyl-tRNA synthetase family. IleS type 1 subfamily. As to quaternary structure, monomer. The cofactor is Zn(2+).

The protein localises to the cytoplasm. The catalysed reaction is tRNA(Ile) + L-isoleucine + ATP = L-isoleucyl-tRNA(Ile) + AMP + diphosphate. In terms of biological role, catalyzes the attachment of isoleucine to tRNA(Ile). As IleRS can inadvertently accommodate and process structurally similar amino acids such as valine, to avoid such errors it has two additional distinct tRNA(Ile)-dependent editing activities. One activity is designated as 'pretransfer' editing and involves the hydrolysis of activated Val-AMP. The other activity is designated 'posttransfer' editing and involves deacylation of mischarged Val-tRNA(Ile). This is Isoleucine--tRNA ligase from Limosilactobacillus fermentum (strain NBRC 3956 / LMG 18251) (Lactobacillus fermentum).